Consider the following 232-residue polypeptide: LOB domain-containing protein 11 (232 aa).

The segment at 1–50 (MLKMEINGGVATPTASAVAKVTETTTPVNSPSPTSSPPPPPSPQQPPQPP) is disordered. Residues 34–50 (TSSPPPPPSPQQPPQPP) are compositionally biased toward pro residues. Residues 54-155 (SPCAACKILR…AQLAKTQVEL (102 aa)) enclose the LOB domain. Residues 181-218 (EQGQQKMSFESSFESGDEFISSPDEESNDLGFLEDNNN) form a disordered region. Residues 188-202 (SFESSFESGDEFISS) are compositionally biased toward low complexity.

The protein belongs to the LOB domain-containing protein family. In terms of tissue distribution, expressed in young shoots, stems, leaves and flowers.

In Arabidopsis thaliana (Mouse-ear cress), this protein is LOB domain-containing protein 11 (LBD11).